The chain runs to 396 residues: Elongation factor Tu 1 (396 aa).

A tr-type G domain is found at 10–206 (KPHCNIGTIG…AVDAYIPQPE (197 aa)). A G1 region spans residues 19–26 (GHVDHGKT). 19-26 (GHVDHGKT) is a GTP binding site. Mg(2+) is bound at residue Thr26. The segment at 60–64 (GITIS) is G2. The tract at residues 81–84 (DCPG) is G3. Residues 81–85 (DCPGH) and 136–139 (NKCD) contribute to the GTP site. The segment at 136-139 (NKCD) is G4. The segment at 174-176 (SAL) is G5.

Belongs to the TRAFAC class translation factor GTPase superfamily. Classic translation factor GTPase family. EF-Tu/EF-1A subfamily. Monomer.

The protein resides in the cytoplasm. It carries out the reaction GTP + H2O = GDP + phosphate + H(+). Its function is as follows. GTP hydrolase that promotes the GTP-dependent binding of aminoacyl-tRNA to the A-site of ribosomes during protein biosynthesis. This Rhodopseudomonas palustris (strain BisB5) protein is Elongation factor Tu 1.